A 198-amino-acid polypeptide reads, in one-letter code: MHYPAPISKLIDSFMKLPGIGPKTASRLAFHVLDMKEDDVVGFAKALVDVKRELTYCSVCGHITDTDPCYICEDKTRDQSMICVVEETKDVIAMEKMREYKGLYHVLHGAISPMEGVGPEDINVPSLLTRLRDEHIQELILATNPNIEGESTAMYIARLVKPIGIKVTRLAHGLPVGGDLEYADEVTLSKAITGRTEI.

The C4-type zinc-finger motif lies at 57-72; that stretch reads CSVCGHITDTDPCYIC. A Toprim domain is found at 80–175; sequence SMICVVEETK…KVTRLAHGLP (96 aa).

This sequence belongs to the RecR family.

Functionally, may play a role in DNA repair. It seems to be involved in an RecBC-independent recombinational process of DNA repair. It may act with RecF and RecO. This chain is Recombination protein RecR, found in Macrococcus caseolyticus (strain JCSC5402) (Macrococcoides caseolyticum).